Consider the following 182-residue polypeptide: Interferon gamma 1 (182 aa).

An N-terminal signal peptide occupies residues 1 to 21 (MIAQNMTIFFWGVCLLTSGWA). An N-linked (GlcNAc...) asparagine glycan is attached at Asn93.

The protein belongs to the type II (or gamma) interferon family. As to quaternary structure, homodimer. As to expression, highly expressed in spleen. Also detected at lower levels in brain, gill, kidney, heart, intestine and muscle. In immune cell populations, has highest expression in peripheral blood leukocytes and splenocytes. Detected in kidney-derived monocytes, neutrophils, macrophages and leukocytes.

It is found in the secreted. Functionally, cytokine which binds to interferon gamma receptor 1-like (ifngr1l). Has activating effects on primary macrophages and neutrophils. Induces nitric oxide production and phagocytic responses in macrophages. Primes macrophages and neutrophils for production of reactive oxygen intermediates (ROI). Stimulates phosphorylation and nuclear localization of the JAK/STAT signal transducer stat1. Promotes increased expression of a number of genes important for macrophage activity, including the interferon regulatory factors irf1, irf2, irf8 and irf9. This is Interferon gamma 1 from Carassius auratus (Goldfish).